We begin with the raw amino-acid sequence, 478 residues long: UBP1-associated protein 2A (478 aa).

The tract at residues 1–99 (MTKKRKLEGE…NQEDDDDEPI (99 aa)) is disordered. The span at 41-75 (GDVEEVEYEEVEEEQEEEVEDDDDEDDGDENEDQT) shows a compositional bias: acidic residues. RRM domains are found at residues 140–217 (RKIF…LASK) and 245–328 (KKIY…KPGK). 2 disordered regions span residues 321–359 (IDGPKPGKQQQHHHNPHAYNNPRYQRNDNNGYGPPGGHG) and 442–478 (GTQPGLQGGYQTPQPGQGGTSRGQHGVGPYGTPYMGH). Over residues 442-456 (GTQPGLQGGYQTPQP) the composition is skewed to low complexity. Residues 457 to 470 (GQGGTSRGQHGVGP) show a composition bias toward gly residues.

As to quaternary structure, interacts with UBA1A, UBA2A, UBP1A, UBP1B, UBP1C and SRK2E. Expressed in young leaves, flowers and embryos.

The protein resides in the nucleus. Heterogeneous nuclear ribonucleoprotein (hnRNP)-like protein that acts as a component of a complex regulating the turnover of mRNAs in the nucleus. Binds with high affinity to RNA molecules that contain U-rich sequences in 3'-UTRs. May function in complex with UBP1 and contribute to the stabilization of mRNAs in the nucleus. However, unlike UBP1, UBA2A does not stimulate pre-mRNA splicing. The polypeptide is UBP1-associated protein 2A (UBA2A) (Arabidopsis thaliana (Mouse-ear cress)).